Here is a 563-residue protein sequence, read N- to C-terminus: Ataxin-10 homolog (563 aa).

A Phosphothreonine modification is found at Thr-433. A disordered region spans residues 544 to 563; the sequence is VSKEEDPGNENSEIISIDED. Ser-559 carries the post-translational modification Phosphoserine.

This sequence belongs to the ataxin-10 family.

Its subcellular location is the cytoplasm. Functionally, may play a role in the regulation of cytokinesis. This chain is Ataxin-10 homolog (CTR86), found in Saccharomyces cerevisiae (strain ATCC 204508 / S288c) (Baker's yeast).